The chain runs to 433 residues: GTPase Obg (433 aa).

An Obg domain is found at 1 to 159 (MKFVDSADLI…FEIRAELKVL (159 aa)). Positions 160 to 332 (ADVGFVGLPN…LLFMIYEELK (173 aa)) constitute an OBG-type G domain. GTP-binding positions include 166–173 (GLPNAGKS), 191–195 (FTTIN), 213–216 (DLPG), 284–287 (NKMD), and 313–315 (SGL). Positions 173 and 193 each coordinate Mg(2+). An OCT domain is found at 355–433 (KFEEQKEDIQ…VFDYELEWTD (79 aa)).

The protein belongs to the TRAFAC class OBG-HflX-like GTPase superfamily. OBG GTPase family. Monomer. Mg(2+) is required as a cofactor.

The protein localises to the cytoplasm. Its function is as follows. An essential GTPase which binds GTP, GDP and possibly (p)ppGpp with moderate affinity, with high nucleotide exchange rates and a fairly low GTP hydrolysis rate. Plays a role in control of the cell cycle, stress response, ribosome biogenesis and in those bacteria that undergo differentiation, in morphogenesis control. The polypeptide is GTPase Obg (Mycoplasma capricolum subsp. capricolum (strain California kid / ATCC 27343 / NCTC 10154)).